The primary structure comprises 201 residues: Thymidylate kinase (201 aa).

Gly-7 to Thr-14 provides a ligand contact to ATP.

This sequence belongs to the thymidylate kinase family.

The catalysed reaction is dTMP + ATP = dTDP + ADP. Phosphorylation of dTMP to form dTDP in both de novo and salvage pathways of dTTP synthesis. In Acholeplasma laidlawii (strain PG-8A), this protein is Thymidylate kinase.